The sequence spans 388 residues: Sporulation-specific mitogen-activated protein kinase SMK1 (388 aa).

Positions 38-337 (YEIIQFLGKG…VEQAISHPFL (300 aa)) constitute a Protein kinase domain. ATP is bound by residues 44–52 (LGKGAYGTV) and Lys-69. The active-site Proton acceptor is the Asp-166. The TXY motif lies at 207 to 209 (TNY).

This sequence belongs to the protein kinase superfamily. CMGC Ser/Thr protein kinase family. MAP kinase subfamily. In terms of assembly, interacts with GSC2. Mg(2+) serves as cofactor. In terms of processing, dually phosphorylated on Thr-207 and Tyr-209, which activates the enzyme.

It carries out the reaction L-seryl-[protein] + ATP = O-phospho-L-seryl-[protein] + ADP + H(+). The enzyme catalyses L-threonyl-[protein] + ATP = O-phospho-L-threonyl-[protein] + ADP + H(+). Activated by tyrosine and threonine phosphorylation. In terms of biological role, required for spore wall assembly. Required for proper deposition of the two outer layers of the spore wall, the chitosan and dityrosine layers. Negatively regulates GSC2, an alternate catalytic subunit of the 1,3-beta-glucan synthase (GS). Participates in a developmentally regulated signal transduction pathway that coordinates cytodifferentiation events with the transcriptional program. In Saccharomyces cerevisiae (strain ATCC 204508 / S288c) (Baker's yeast), this protein is Sporulation-specific mitogen-activated protein kinase SMK1 (SMK1).